The chain runs to 425 residues: tRNA(Ile)-lysidine synthase (425 aa).

27-32 (SGGLDS) contributes to the ATP binding site.

It belongs to the tRNA(Ile)-lysidine synthase family.

The protein resides in the cytoplasm. It carries out the reaction cytidine(34) in tRNA(Ile2) + L-lysine + ATP = lysidine(34) in tRNA(Ile2) + AMP + diphosphate + H(+). Ligates lysine onto the cytidine present at position 34 of the AUA codon-specific tRNA(Ile) that contains the anticodon CAU, in an ATP-dependent manner. Cytidine is converted to lysidine, thus changing the amino acid specificity of the tRNA from methionine to isoleucine. The chain is tRNA(Ile)-lysidine synthase from Streptococcus sanguinis (strain SK36).